The sequence spans 202 residues: Imidazoleglycerol-phosphate dehydratase (202 aa).

This sequence belongs to the imidazoleglycerol-phosphate dehydratase family.

Its subcellular location is the cytoplasm. It carries out the reaction D-erythro-1-(imidazol-4-yl)glycerol 3-phosphate = 3-(imidazol-4-yl)-2-oxopropyl phosphate + H2O. It functions in the pathway amino-acid biosynthesis; L-histidine biosynthesis; L-histidine from 5-phospho-alpha-D-ribose 1-diphosphate: step 6/9. The sequence is that of Imidazoleglycerol-phosphate dehydratase from Rhizobium etli (strain ATCC 51251 / DSM 11541 / JCM 21823 / NBRC 15573 / CFN 42).